The sequence spans 144 residues: Cell division protein SepF (144 aa).

A compositionally biased stretch (polar residues) spans 21 to 38 (TDLQGTKTTDEVSPTSRP). The disordered stretch occupies residues 21 to 40 (TDLQGTKTTDEVSPTSRPDN).

Belongs to the SepF family. Homodimer. Interacts with FtsZ.

Its subcellular location is the cytoplasm. Cell division protein that is part of the divisome complex and is recruited early to the Z-ring. Probably stimulates Z-ring formation, perhaps through the cross-linking of FtsZ protofilaments. Its function overlaps with FtsA. The chain is Cell division protein SepF from Latilactobacillus sakei subsp. sakei (strain 23K) (Lactobacillus sakei subsp. sakei).